Consider the following 383-residue polypeptide: uncharacterized protein (383 aa).

Disordered stretches follow at residues E27 to P66 and L242 to R281. Composition is skewed to low complexity over residues N28–N63 and L242–S275.

This is an uncharacterized protein from Dictyostelium discoideum (Social amoeba).